The chain runs to 766 residues: Phospholipid phosphatase-related protein type 4 (766 aa).

The residue at position 37 (serine 37) is a Phosphoserine. 3 consecutive transmembrane segments (helical) span residues 68–88 (LPCF…SLYF), 120–140 (AIPF…TIMV), and 179–199 (FVGV…IIQL). N-linked (GlcNAc...) asparagine glycosylation is found at asparagine 215 and asparagine 220. A helical membrane pass occupies residues 248–268 (SFPSQHATLAAFAAVYVSMYF). N-linked (GlcNAc...) asparagine glycosylation is present at asparagine 269. 2 consecutive transmembrane segments (helical) span residues 277 to 297 (KLLK…CGLT) and 309 to 329 (VYCG…YAVG). Phosphoserine is present on serine 347. N-linked (GlcNAc...) asparagine glycosylation is present at asparagine 363. The residue at position 386 (serine 386) is a Phosphoserine. A glycan (N-linked (GlcNAc...) asparagine) is linked at asparagine 433. Serine 439 carries the phosphoserine modification. The segment at 454-494 (SKNESRKMSLQVMDTEPEGQSPPRSIEMRSSSEPSRVGVNG) is disordered. Residue asparagine 456 is glycosylated (N-linked (GlcNAc...) asparagine). Phosphoserine is present on residues serine 462 and serine 474. N-linked (GlcNAc...) asparagine glycosylation is found at asparagine 515, asparagine 545, and asparagine 570. Serine 608 carries the post-translational modification Phosphoserine. 3 disordered regions span residues 634–654 (PIIQ…KWKA), 672–701 (DSES…HHHH), and 742–766 (ERSN…AYKD). Residues 672–697 (DSESCESLKDSFGSGDRKRSNIDSNE) show a composition bias toward basic and acidic residues. A compositionally biased stretch (polar residues) spans 743–752 (RSNSPENTRN).

It belongs to the PA-phosphatase related phosphoesterase family. O-glycosylated. Probably at Ser-347. Brain-specific, it is exclusively expressed in neurons (at protein level).

It is found in the postsynaptic density membrane. In terms of biological role, postsynaptic density membrane protein that indirectly regulates glutamatergic synaptic transmission through lysophosphatidic acid (LPA)-mediated signaling pathways. Binds lysophosphatidic acid (LPA) and mediates its internalization into cells. Could act as receptor or a transporter of this lipid at the post-synaptic membrane. Modulates lysophosphatidic acid (LPA) activity in neuron axonal outgrowth during development by attenuating phospholipid-induced axon collapse. In Mus musculus (Mouse), this protein is Phospholipid phosphatase-related protein type 4.